The sequence spans 241 residues: Probable 2-phosphosulfolactate phosphatase (241 aa).

It belongs to the ComB family. Mg(2+) is required as a cofactor.

It carries out the reaction (2R)-O-phospho-3-sulfolactate + H2O = (2R)-3-sulfolactate + phosphate. This is Probable 2-phosphosulfolactate phosphatase from Deinococcus geothermalis (strain DSM 11300 / CIP 105573 / AG-3a).